Consider the following 509-residue polypeptide: Probable xyloglucan galactosyltransferase GT12 (509 aa).

The Cytoplasmic segment spans residues 1–3 (MMK). Residues 4–24 (PVPKLWVVISSAFVFCLLVLF) form a helical; Signal-anchor for type II membrane protein membrane-spanning segment. Residues 25-509 (QINKSDLIEA…KLEIIHEKTA (485 aa)) are Lumenal-facing. Asn27, Asn59, Asn65, Asn169, Asn170, Asn195, Asn257, and Asn416 each carry an N-linked (GlcNAc...) asparagine glycan.

The protein belongs to the glycosyltransferase 47 family. As to expression, expressed in pollen grains.

It localises to the golgi apparatus membrane. Functionally, functions in xyloglucan synthesis by adding side chains to the xylosylated glucan backbone. Involved in the galactosylation of hemicellulose xyloglucan. This Arabidopsis thaliana (Mouse-ear cress) protein is Probable xyloglucan galactosyltransferase GT12.